We begin with the raw amino-acid sequence, 192 residues long: Ion-translocating oxidoreductase complex subunit A (192 aa).

Transmembrane regions (helical) follow at residues 5–25 (LLLLISTVLVNNFVLVKFLGL), 39–59 (IGMSMATTFVLTLASILSYLV), 65–85 (LPFDLSYLRTMSFILVIAVVV), 102–122 (ALGIYLPLITTNCAVLGVALL), 134–154 (AIFGFGAALGFSLVLILFSAM), and 171–191 (AIAMITAGLMSLAFMGFTGLV).

It belongs to the NqrDE/RnfAE family. The complex is composed of six subunits: RnfA, RnfB, RnfC, RnfD, RnfE and RnfG.

The protein resides in the cell inner membrane. In terms of biological role, part of a membrane-bound complex that couples electron transfer with translocation of ions across the membrane. The sequence is that of Ion-translocating oxidoreductase complex subunit A from Shewanella baltica (strain OS223).